Here is a 221-residue protein sequence, read N- to C-terminus: Uracil-DNA glycosylase 1 (221 aa).

The Proton acceptor role is filled by Asp-61.

The protein belongs to the uracil-DNA glycosylase (UDG) superfamily. UNG family.

The protein localises to the cytoplasm. It catalyses the reaction Hydrolyzes single-stranded DNA or mismatched double-stranded DNA and polynucleotides, releasing free uracil.. In terms of biological role, excises uracil residues from the DNA which can arise as a result of misincorporation of dUMP residues by DNA polymerase or due to deamination of cytosine. This is Uracil-DNA glycosylase 1 from Listeria monocytogenes serotype 4b (strain F2365).